A 130-amino-acid chain; its full sequence is uncharacterized protein (130 aa).

Positions 1–18 (MVEVWWSLIGAAVPALIA) are cleaved as a signal peptide.

This is an uncharacterized protein from Arabidopsis thaliana (Mouse-ear cress).